Consider the following 199-residue polypeptide: Probable molybdenum cofactor guanylyltransferase (199 aa).

Residues 6–8 (LAG), Lys18, Asp65, and Asp97 each bind GTP. Position 97 (Asp97) interacts with Mg(2+).

It belongs to the MobA family. Mg(2+) serves as cofactor.

It is found in the cytoplasm. The catalysed reaction is Mo-molybdopterin + GTP + H(+) = Mo-molybdopterin guanine dinucleotide + diphosphate. Transfers a GMP moiety from GTP to Mo-molybdopterin (Mo-MPT) cofactor (Moco or molybdenum cofactor) to form Mo-molybdopterin guanine dinucleotide (Mo-MGD) cofactor. This is Probable molybdenum cofactor guanylyltransferase from Staphylococcus aureus (strain COL).